We begin with the raw amino-acid sequence, 490 residues long: Betaine aldehyde dehydrogenase (490 aa).

The K(+) site is built by Thr26, Ile27, and Asp93. 150 to 152 contributes to the NAD(+) binding site; the sequence is GAW. Catalysis depends on Lys162, which acts as the Charge relay system. 176 to 179 lines the NAD(+) pocket; sequence KPSE. Val180 contributes to the K(+) binding site. 230–233 contacts NAD(+); the sequence is GTST. Leu246 is a binding site for K(+). Residue Glu252 is the Proton acceptor of the active site. NAD(+) is bound by residues Gly254, Cys286, and Glu387. Residue Cys286 is the Nucleophile of the active site. Residue Cys286 is modified to Cysteine sulfenic acid (-SOH). Residues Lys457 and Gly460 each contribute to the K(+) site. Residue Glu464 is the Charge relay system of the active site.

The protein belongs to the aldehyde dehydrogenase family. In terms of assembly, dimer of dimers. It depends on K(+) as a cofactor.

The enzyme catalyses betaine aldehyde + NAD(+) + H2O = glycine betaine + NADH + 2 H(+). The protein operates within amine and polyamine biosynthesis; betaine biosynthesis via choline pathway; betaine from betaine aldehyde: step 1/1. Its function is as follows. Involved in the biosynthesis of the osmoprotectant glycine betaine. Catalyzes the irreversible oxidation of betaine aldehyde to the corresponding acid. The polypeptide is Betaine aldehyde dehydrogenase (Pseudomonas paraeruginosa (strain DSM 24068 / PA7) (Pseudomonas aeruginosa (strain PA7))).